Here is a 596-residue protein sequence, read N- to C-terminus: MTKAYNIIHHKFDVVVVGAGGAGLRSAFGMAKEGLNTACITKLFPTRSHTVAAQGGISAALGNMGEDDWRWHMYDTVKGSDWLGDQDAIEYMCKNAPDAILELEHYGVPFSRTEEGKIYQRPFGGMTTEYGKGKAAQRTCAAADRTGHAILHTLYQQSLKHKVQFFVEYFAIDLLMEDGECRGVVAWNLDDGSLHCFRAHNVVLATGGYGRAYFSATSAHTCTGDGGGMAIRAGLPLQDMEFVQFHPTGIYSAGCLITEGARGEGGYLVNANGERFMERYAPAAKDLASRDVVSRAMTIEIREGRGVGEHKDHVFLHLNHLSPEILHSRLPGISETAKIFAGVDVTKEPIPVLPTVHYNMGGIPTNYHGQVIIKDGKNHNSVVKGLMAIGEAACVSVHGANRLGSNSLLDLVVFGRSSALKAAELIKPASPHRSIKEESLEKIINRFDKVRHANGNILVAELRLKMQRTMQSHASVFRTQEVLDEGAGMISEIRSGYKDIKINDKSLIWNSDLVEALELDNLLDQALVTVYSAAARKESRGAHAREDYPDRNDEDWMKHTLSSIDEAGKVVLDYKPVTLTTLTDEVTAVPPVKRVY.

FAD-binding positions include 18–23 (GAGGAG), 41–56 (TKLF…AQGG), and D225. Residue H49 is modified to Tele-8alpha-FAD histidine. 2 residues coordinate substrate: H246 and T258. The active-site Proton acceptor is the R290. H357 provides a ligand contact to substrate. E391 is an FAD binding site. R402 serves as a coordination point for substrate. An FAD-binding site is contributed by 407–408 (SL).

This sequence belongs to the FAD-dependent oxidoreductase 2 family. FRD/SDH subfamily. As to quaternary structure, part of an enzyme complex containing four subunits: a flavoprotein, an iron-sulfur, cytochrome b-556, and a hydrophobic anchor protein. The cofactor is FAD.

It localises to the cell inner membrane. The catalysed reaction is a quinone + succinate = fumarate + a quinol. It participates in carbohydrate metabolism; tricarboxylic acid cycle; fumarate from succinate (bacterial route): step 1/1. This Rickettsia conorii (strain ATCC VR-613 / Malish 7) protein is Succinate dehydrogenase flavoprotein subunit (sdhA).